We begin with the raw amino-acid sequence, 102 residues long: Protein RnfH (102 aa).

The protein belongs to the UPF0125 (RnfH) family.

The polypeptide is Protein RnfH (Haemophilus influenzae (strain PittEE)).